A 1820-amino-acid chain; its full sequence is uncharacterized protein (1820 aa).

9 disordered regions span residues Met-1–Gly-73, Thr-86–Ala-158, Gly-226–Tyr-260, Glu-286–Glu-366, Asp-453–Ser-497, Leu-519–Ala-548, Gly-577–Pro-597, Gly-619–Gly-689, and His-735–Ser-830. Residues Asn-20–Asn-31 show a composition bias toward polar residues. Positions Thr-86–His-128 are enriched in low complexity. Residues His-129–Thr-146 are compositionally biased toward basic residues. Low complexity predominate over residues Ser-247–Asn-259. A coiled-coil region spans residues Val-265–Lys-308. Positions Asp-294 to Glu-305 are enriched in basic and acidic residues. Residues Ala-346 to Gly-358 are compositionally biased toward low complexity. The stretch at Thr-362 to Gln-438 forms a coiled coil. The span at Asp-453 to Asn-463 shows a compositional bias: polar residues. Phosphoserine is present on residues Ser-542 and Ser-543. Positions Gly-623–Ser-632 are enriched in low complexity. A compositionally biased stretch (gly residues) spans His-655–Thr-669. Residues Asn-738–Ala-769 are compositionally biased toward low complexity. Residues Gln-787 to Gly-818 are compositionally biased toward polar residues. PH domains lie at Ser-909–Arg-1003 and Lys-1017–Gly-1124. Residues Ser-1073, Ser-1075, and Ser-1077 each carry the phosphoserine modification. In terms of domain architecture, MyTH4 spans His-1159–Leu-1378. Positions His-1389–Val-1712 constitute an FERM domain. Disordered regions lie at residues Pro-1713–Phe-1748 and Ala-1764–Lys-1820. Over residues Gly-1714–Asn-1724 the composition is skewed to polar residues. A compositionally biased stretch (low complexity) spans Ala-1764–His-1781. Residues His-1805 to Lys-1820 show a composition bias toward basic and acidic residues.

This is an uncharacterized protein from Drosophila melanogaster (Fruit fly).